Reading from the N-terminus, the 867-residue chain is MNISASTCGSPSSSESLPAGDLFKELWSKLKECHDKELQELLLKINKLKKQRCLDAQRLEEFYTKNQHLREQQKTLHDTIKVLEDRLRAGLCDRCTVTEEHMRKKQQEFENIRQQNLKLITELMNDKNALQDENKRLSEQLHNMQKSRWKSDEENPADTGEGEDGVIPDSPLSTFSLSMVSRMRRKKDNKHIRYSEKAPEDTLTLERKITCIPSQGSAEKNASHSSHRRKGEDILVAETLELSPLPNGKSKRKKVYLCSKTSIAFASILLVLLHLFAEQLHSWMNNLSQVSKSLRWCLPLKGNNKQGYIEYLFRFTEGSMEESQGNDDDGWNTKEASPVFGGPARNIRRSAEMDCISPPLPVGLNSKLISKCSRNPSDFLFNSVQAKAEDGAQATRLCLGKETDSVISQCSSNGQGVLRCSPNKSVPGGAQMGKDILDSEHHKQMANRYGKRKNAEAEQEESCESSFDKENNIPIKDIGSERHSMLDKPLDLSDRFSVLRPQDRSHGSSRGRTKQTFALVPEKPDPKKPLHIDLREDLYHQTKQKKVFVSGLVERSAFNLHEDKEVTEEGNQLFDDLEIETVHEPKRNARSVHRGVQPTSVLQPNLHMVQACPESQQGKPPIDNMQWSIDPGADLSQYEMDMTMEDSKGGSPAKPELEDMDYTYVSESFLLKMKKGDPGDSEDESKGQDSFEKMFDKSEYGEYVLCIKDRSPSQSCKERNDLSSMVCKNIYTHSVRFDRVKKQKAFVEPYFQRPEQKKPAMDFPHIEVVRKKDERRKMLGHTCKECELYYADLPEEERAKKLASCSRHRFRYIPPSTPENFWEVGFPSTQTCQDRGYIKEELSPCQRPRRRQPYNAKFSSKIKEQKT.

The essential for binding to the MRN complex and for RPA focus formation on DNA damage stretch occupies residues 25–48 (ELWSKLKECHDKELQELLLKINKL). 2 coiled-coil regions span residues 38–87 (LQEL…EDRL) and 120–141 (ITELMNDKNALQDENKRLSEQL). Disordered stretches follow at residues 141-171 (LHNMQKSRWKSDEENPADTGEGEDGVIPDSP) and 448-486 (RYGKRKNAEAEQEESCESSFDKENNIPIKDIGSERHSML). Acidic residues predominate over residues 154 to 166 (ENPADTGEGEDGV). The PXDLS motif signature appears at 489–493 (PLDLS). The damage-recruitment motif stretch occupies residues 508-531 (SSRGRTKQTFALVPEKPDPKKPLH). Residues Thr-817 and Thr-829 each carry the phosphothreonine modification. The tract at residues 843 to 867 (SPCQRPRRRQPYNAKFSSKIKEQKT) is disordered.

It belongs to the COM1/SAE2/CtIP family. As to quaternary structure, homotetramer; formed by antiparallel association of helical extensions protruding from the N-termini of two parallel coiled-coil dimers. Interacts with the MRN complex; the interaction links DNA sensing to resection. Interacts with samhd1. In terms of processing, phosphorylation at Thr-817 and Thr-829 promote interaction with nbn and recruitment to double-strand breaks (DSBs).

The protein localises to the nucleus. It localises to the chromosome. Its function is as follows. Endonuclease that cooperates with the MRE11-RAD50-NBN (MRN) complex in DNA-end resection, the first step of double-strand break (DSB) repair through the homologous recombination (HR) pathway. Functions downstream of the MRN complex and ATM, promotes ATR activation and its recruitment to DSBs in the S/G2 phase facilitating the generation of ssDNA. Specifically promotes the endonuclease activity of the MRN complex to clear DNA ends containing protein adducts: recruited to DSBs by nbn following phosphorylation, and promotes the endonuclease of mre11 to clear protein-DNA adducts and generate clean double-strand break ends. The protein is DNA endonuclease RBBP8 (rbbp8) of Xenopus tropicalis (Western clawed frog).